Consider the following 347-residue polypeptide: Magnesium-protoporphyrin IX monomethyl ester [oxidative] cyclase (347 aa).

The protein belongs to the AcsF family. It depends on Fe cation as a cofactor.

The catalysed reaction is Mg-protoporphyrin IX 13-monomethyl ester + 3 NADPH + 3 O2 + 2 H(+) = 3,8-divinyl protochlorophyllide a + 3 NADP(+) + 5 H2O. Its pathway is porphyrin-containing compound metabolism; chlorophyll biosynthesis (light-independent). In terms of biological role, catalyzes the formation of the isocyclic ring in chlorophyll biosynthesis. Mediates the cyclase reaction, which results in the formation of divinylprotochlorophyllide (Pchlide) characteristic of all chlorophylls from magnesium-protoporphyrin IX 13-monomethyl ester (MgPMME). The protein is Magnesium-protoporphyrin IX monomethyl ester [oxidative] cyclase of Prochlorococcus marinus (strain SARG / CCMP1375 / SS120).